Reading from the N-terminus, the 357-residue chain is UDP-N-acetylglucosamine--N-acetylmuramyl-(pentapeptide) pyrophosphoryl-undecaprenol N-acetylglucosamine transferase (357 aa).

Residues threonine 10–glycine 12, asparagine 124, serine 189, isoleucine 244, and glutamine 289 each bind UDP-N-acetyl-alpha-D-glucosamine.

Belongs to the glycosyltransferase 28 family. MurG subfamily.

The protein localises to the cell membrane. It catalyses the reaction Mur2Ac(oyl-L-Ala-gamma-D-Glu-L-Lys-D-Ala-D-Ala)-di-trans,octa-cis-undecaprenyl diphosphate + UDP-N-acetyl-alpha-D-glucosamine = beta-D-GlcNAc-(1-&gt;4)-Mur2Ac(oyl-L-Ala-gamma-D-Glu-L-Lys-D-Ala-D-Ala)-di-trans,octa-cis-undecaprenyl diphosphate + UDP + H(+). It functions in the pathway cell wall biogenesis; peptidoglycan biosynthesis. In terms of biological role, cell wall formation. Catalyzes the transfer of a GlcNAc subunit on undecaprenyl-pyrophosphoryl-MurNAc-pentapeptide (lipid intermediate I) to form undecaprenyl-pyrophosphoryl-MurNAc-(pentapeptide)GlcNAc (lipid intermediate II). This Lactococcus lactis subsp. lactis (strain IL1403) (Streptococcus lactis) protein is UDP-N-acetylglucosamine--N-acetylmuramyl-(pentapeptide) pyrophosphoryl-undecaprenol N-acetylglucosamine transferase.